Reading from the N-terminus, the 156-residue chain is Transcriptional repressor NrdR (156 aa).

A zinc finger lies at 3–34; the sequence is CPFCGSMDTRVLDSRPTLDGAAIRRRRECISC. One can recognise an ATP-cone domain in the interval 49–139; that stretch reads VLVIKKDGRR…VYRDFREVDQ (91 aa).

The protein belongs to the NrdR family. Zn(2+) serves as cofactor.

Negatively regulates transcription of bacterial ribonucleotide reductase nrd genes and operons by binding to NrdR-boxes. The polypeptide is Transcriptional repressor NrdR (Thermotoga neapolitana (strain ATCC 49049 / DSM 4359 / NBRC 107923 / NS-E)).